Here is a 356-residue protein sequence, read N- to C-terminus: UDP-N-acetylglucosamine--N-acetylmuramyl-(pentapeptide) pyrophosphoryl-undecaprenol N-acetylglucosamine transferase (356 aa).

UDP-N-acetyl-alpha-D-glucosamine is bound by residues R166, S196, and Q290.

The protein belongs to the glycosyltransferase 28 family. MurG subfamily.

It localises to the cell membrane. It catalyses the reaction Mur2Ac(oyl-L-Ala-gamma-D-Glu-L-Lys-D-Ala-D-Ala)-di-trans,octa-cis-undecaprenyl diphosphate + UDP-N-acetyl-alpha-D-glucosamine = beta-D-GlcNAc-(1-&gt;4)-Mur2Ac(oyl-L-Ala-gamma-D-Glu-L-Lys-D-Ala-D-Ala)-di-trans,octa-cis-undecaprenyl diphosphate + UDP + H(+). It functions in the pathway cell wall biogenesis; peptidoglycan biosynthesis. Functionally, cell wall formation. Catalyzes the transfer of a GlcNAc subunit on undecaprenyl-pyrophosphoryl-MurNAc-pentapeptide (lipid intermediate I) to form undecaprenyl-pyrophosphoryl-MurNAc-(pentapeptide)GlcNAc (lipid intermediate II). This is UDP-N-acetylglucosamine--N-acetylmuramyl-(pentapeptide) pyrophosphoryl-undecaprenol N-acetylglucosamine transferase from Staphylococcus aureus (strain Mu3 / ATCC 700698).